Reading from the N-terminus, the 491-residue chain is 1-aminocyclopropane-1-carboxylate synthase (491 aa).

Lys278 carries the post-translational modification N6-(pyridoxal phosphate)lysine.

The protein belongs to the class-I pyridoxal-phosphate-dependent aminotransferase family. Homodimer. Requires pyridoxal 5'-phosphate as cofactor.

The catalysed reaction is S-adenosyl-L-methionine = 1-aminocyclopropane-1-carboxylate + S-methyl-5'-thioadenosine + H(+). It functions in the pathway alkene biosynthesis; ethylene biosynthesis via S-adenosyl-L-methionine; ethylene from S-adenosyl-L-methionine: step 1/2. In terms of biological role, catalyzes the formation of 1-aminocyclopropane-1-carboxylate, a direct precursor of ethylene in higher plants. The sequence is that of 1-aminocyclopropane-1-carboxylate synthase (ACS1) from Nicotiana tabacum (Common tobacco).